The chain runs to 1262 residues: Putative late blight resistance protein homolog R1B-23 (1262 aa).

Coiled-coil stretches lie at residues 364 to 384 (DSLAFLKNQLQVIQTKFESMQ) and 475 to 496 (RMNEEIVGFEDVIETLRKKLLN). An NB-ARC domain is found at 475–761 (RMNEEIVGFE…ISESFIKSCE (287 aa)). An ATP-binding site is contributed by 508–515 (GMPGLGKT). LRR repeat units follow at residues 890-914 (FKFLKVLDLEHQVVIDSIPTELFYL), 933-961 (LWNLETLILNRTSAATGKTLLLPSTVWDM), 1036-1059 (PIRLEMLKLHQSNIFKPISFCISA), 1064-1083 (YLELSGFYLDSQYLSETADH), 1084-1112 (LKHLEVLKLYYVEFGDHREWKVSNGMFPQ), and 1133-1157 (FPNLEQLVLRRCRHLMEIPSCFMDI). The HMA domain maps to 1181–1248 (ETQVEDNQNT…KLRNVAYADE (68 aa)).

The protein belongs to the disease resistance NB-LRR family.

Its subcellular location is the cytoplasm. It is found in the membrane. Confers resistance to late blight (Phytophthora infestans) races carrying the avirulence gene Avr1. Resistance proteins guard the plant against pathogens that contain an appropriate avirulence protein via an indirect interaction with this avirulence protein. That triggers a defense system including the hypersensitive response, which restricts the pathogen growth. The sequence is that of Putative late blight resistance protein homolog R1B-23 (R1B-23) from Solanum demissum (Wild potato).